A 29-amino-acid polypeptide reads, in one-letter code: Cycloviolacin-O22 (29 aa).

The cyclopeptide (Gly-Asn) cross-link spans Gly1–Asn29. Intrachain disulfides connect Cys5-Cys19, Cys9-Cys21, and Cys14-Cys26.

In terms of processing, this is a cyclic peptide. As to expression, expressed in roots and runners but not in leaves, petals and petioles (at protein level).

In terms of biological role, probably participates in a plant defense mechanism. In Viola odorata (Sweet violet), this protein is Cycloviolacin-O22.